The following is a 147-amino-acid chain: Peptide deformylase 1 (147 aa).

Fe cation contacts are provided by C90 and H132. E133 is an active-site residue. Residue H136 coordinates Fe cation.

The protein belongs to the polypeptide deformylase family. The cofactor is Fe(2+).

It catalyses the reaction N-terminal N-formyl-L-methionyl-[peptide] + H2O = N-terminal L-methionyl-[peptide] + formate. Removes the formyl group from the N-terminal Met of newly synthesized proteins. Requires at least a dipeptide for an efficient rate of reaction. N-terminal L-methionine is a prerequisite for activity but the enzyme has broad specificity at other positions. This is Peptide deformylase 1 from Clostridium perfringens (strain 13 / Type A).